Consider the following 133-residue polypeptide: Ribosome-binding factor A (133 aa).

It belongs to the RbfA family. Monomer. Binds 30S ribosomal subunits, but not 50S ribosomal subunits or 70S ribosomes.

The protein resides in the cytoplasm. Functionally, one of several proteins that assist in the late maturation steps of the functional core of the 30S ribosomal subunit. Associates with free 30S ribosomal subunits (but not with 30S subunits that are part of 70S ribosomes or polysomes). Required for efficient processing of 16S rRNA. May interact with the 5'-terminal helix region of 16S rRNA. This Yersinia enterocolitica protein is Ribosome-binding factor A.